A 926-amino-acid chain; its full sequence is LPS-assembly protein LptD (926 aa).

The first 22 residues, 1-22, serve as a signal peptide directing secretion; the sequence is MALKSPAFRKKFPLLVTGSLLA. The disordered stretch occupies residues 55–91; the sequence is AAAVDLPPRPVHDTTSVSSNGTVTSQGTSSGEQSAGT. The segment covering 68–91 has biased composition (low complexity); the sequence is TTSVSSNGTVTSQGTSSGEQSAGT.

Belongs to the LptD family. Component of the lipopolysaccharide transport and assembly complex. Interacts with LptE and LptA.

It localises to the cell outer membrane. Functionally, together with LptE, is involved in the assembly of lipopolysaccharide (LPS) at the surface of the outer membrane. This is LPS-assembly protein LptD from Pseudomonas syringae pv. syringae (strain B728a).